The sequence spans 93 residues: N-acetyl-S-hydroxy-L-cysteine reductase (93 aa).

One can recognise a Glutaredoxin domain in the interval M1–R93. C15 and C18 are joined by a disulfide.

Belongs to the glutaredoxin family.

The catalysed reaction is N-acetyl-S-hydroxy-L-cysteine + AH2 = N-acetyl-L-cysteine + A + H2O. Its pathway is amino-acid metabolism. Its function is as follows. Involved in a cysteine salvage pathway from S-alkylcysteine. Catalyzes the reduction of N-acetyl-S-hydroxy-L-cysteine (N-acetyl-L-cysteine sulfenic acid) to N-acetyl-L-cysteine. This pathway is likely important in the catabolism of alkylated cysteine generated by proteolysis of alkylated glutathione formed in the detoxification of a wide range of electrophiles. This Bacillus subtilis (strain 168) protein is N-acetyl-S-hydroxy-L-cysteine reductase.